The sequence spans 188 residues: RNA 2',3'-cyclic phosphodiesterase (188 aa).

The active-site Proton donor is the histidine 42. Short sequence motifs (HXTX) lie at residues 42–45 and 130–133; these read HMTL and HVTI. Catalysis depends on histidine 130, which acts as the Proton acceptor.

It belongs to the 2H phosphoesterase superfamily. ThpR family.

The enzyme catalyses a 3'-end 2',3'-cyclophospho-ribonucleotide-RNA + H2O = a 3'-end 2'-phospho-ribonucleotide-RNA + H(+). In terms of biological role, hydrolyzes RNA 2',3'-cyclic phosphodiester to an RNA 2'-phosphomonoester. The chain is RNA 2',3'-cyclic phosphodiesterase from Aquifex aeolicus (strain VF5).